The primary structure comprises 181 residues: MTTETISLIKSSIKSIQDYPKPGILFRDVTSLLEDAKAYQATIGLLVERYKDMGFTKVVGTEARGFLFGAPLALELGVGFVPVRKPGKLPRPTIAQSYELEYGIDTLEIHTDAIVEGDKVLVVDDLLATGGTIEATTKLIRQLGGEVEHAAFVINLPEIGGDKRLEALGLNVFSICDFEGH.

It belongs to the purine/pyrimidine phosphoribosyltransferase family. In terms of assembly, homodimer.

The protein resides in the cytoplasm. It catalyses the reaction AMP + diphosphate = 5-phospho-alpha-D-ribose 1-diphosphate + adenine. The protein operates within purine metabolism; AMP biosynthesis via salvage pathway; AMP from adenine: step 1/1. Its function is as follows. Catalyzes a salvage reaction resulting in the formation of AMP, that is energically less costly than de novo synthesis. In Vibrio parahaemolyticus serotype O3:K6 (strain RIMD 2210633), this protein is Adenine phosphoribosyltransferase.